The primary structure comprises 461 residues: MPKMFGTDGVRGLANRDLTARLALDLGDAAVRVLGDAGTQDDQPEGRRRALVGRDTRVSGDFLASALSAGMAAGGFDVIDAGIIPTPGIAFLTSVLNVEMGAVISASHNPMPDNGIKFFARGGFKLPDQKEDDIEAVLGQDWDRPTGAGVGRVSHDQTTATNLYIDHLVATIAPLNDDKTQPKPLKGLKIVADCANGATSVVAPEALRRAGADVIVINASPDGYNINKNAGSTHPEQLQAMVKATDAVMGVAFDGDADRCLAVDEDGNMINGDQIMGILARAKQREGKLNHDTLVVTVMSNLGLKLALKDMGIKTVETAVGDRYVLEEMLKGDYSLGGEQSGHVINREFATTGDGTLTALTLCNEVVKSGKSLKELAADFPQLPQTLINVPNVDKKAASTNKRIQDAVAREEELLGDTGRVLLRPSGTEPLVRVMAEAATQAYADEVCTRLAKIVAEELAL.

The Phosphoserine intermediate role is filled by Ser107. Ser107, Asp254, Asp256, and Asp258 together coordinate Mg(2+). Residue Ser107 is modified to Phosphoserine.

Belongs to the phosphohexose mutase family. It depends on Mg(2+) as a cofactor. Post-translationally, activated by phosphorylation.

The catalysed reaction is alpha-D-glucosamine 1-phosphate = D-glucosamine 6-phosphate. Functionally, catalyzes the conversion of glucosamine-6-phosphate to glucosamine-1-phosphate. The polypeptide is Phosphoglucosamine mutase (Bifidobacterium longum (strain DJO10A)).